Consider the following 64-residue polypeptide: Drosocin antimicrobial peptides (64 aa).

The signal sequence occupies residues 1–19; that stretch reads MKFTIVFLLLACVFAMAVA. A propeptide spanning residues 20-21 is cleaved from the precursor; sequence TP. Residue serine 28 is glycosylated (O-linked (GalNAc...) serine). O-linked (GalNAc...) threonine glycosylation is present at threonine 32. The tract at residues 32–40 is critical for inhibition of translation, possibly due to its role in mediating interactions with bacterial 23S rRNA and peptide chain release factors; that stretch reads TSHPRPIRV.

Belongs to the drosocin family. In terms of assembly, associates with the bacterial 50S ribosomal complex, occupying the nascent peptide exit tunnel. Interacts with bacterial 23S rRNA; this interaction is direct. Interacts with bacterial rplV/50S ribosomal protein L22; this interaction is direct. Interacts with bacterial prfA/peptide chain release factor RF1; while associated with the bacterial 50S ribosomal complex, this interaction is direct and traps RF1 on the ribosome, inhibiting further translation. Post-translationally, proteolytically cleaved at a pair of basic residues corresponding to the RXK/RR optimal cleavage site for furin proteases to produce two distinct antibacterial peptides. In terms of processing, O-glycosylated. O-glycosylation may be required for efficient uptake by target bacterial cells. Monosaccharide modification of Thr-32 provides better antibacterial activity than disaccharide modification or no modification. O-glycosylation of Thr-32 is not essential for antimicrobial activity but enhances this activity by mediating interactions with the 23S rRNA and increasing the efficiency of translation inhibition.

It localises to the secreted. Functionally, antibacterial peptide with strong anti-Gram-negative bacteria activity. Significantly contributes to antibacterial activity against Enterobacter cloacae but not Providencia burhodogranariea. Inhibitor of bacterial translation machinery that targets translation termination in a prfA- or prfB-dependent manner. Binds within the nascent peptide exit tunnel of the bacterial large ribosomal subunit, potentially interfering with nascent chain translocation that occurs post-peptide bond formation. Binds prfA/RF1 (and potentially prfB/RF2), trapping it on the ribosome after release of the nascent polypeptide chain and preventing further translation. The resulting depletion of peptide chain release factors further disrupts bacterial translation by preventing ribosomal peptide chain release and inducing stop codon readthrough. Entry into target Escherichia coli cells requires the bacterial peptide antibiotic transporter sbmA. Peptide with significant antibacterial activity against Providencia burhodogranariea but not Enterobacter cloacae. The polypeptide is Drosocin antimicrobial peptides (Dro) (Drosophila simulans (Fruit fly)).